Consider the following 232-residue polypeptide: Biosynthetic peptidoglycan transglycosylase (232 aa).

A helical membrane pass occupies residues 14–34 (AAVALVLLYQLWIFAHVLWWI).

The protein belongs to the glycosyltransferase 51 family.

The protein resides in the cell inner membrane. It catalyses the reaction [GlcNAc-(1-&gt;4)-Mur2Ac(oyl-L-Ala-gamma-D-Glu-L-Lys-D-Ala-D-Ala)](n)-di-trans,octa-cis-undecaprenyl diphosphate + beta-D-GlcNAc-(1-&gt;4)-Mur2Ac(oyl-L-Ala-gamma-D-Glu-L-Lys-D-Ala-D-Ala)-di-trans,octa-cis-undecaprenyl diphosphate = [GlcNAc-(1-&gt;4)-Mur2Ac(oyl-L-Ala-gamma-D-Glu-L-Lys-D-Ala-D-Ala)](n+1)-di-trans,octa-cis-undecaprenyl diphosphate + di-trans,octa-cis-undecaprenyl diphosphate + H(+). Its pathway is cell wall biogenesis; peptidoglycan biosynthesis. Functionally, peptidoglycan polymerase that catalyzes glycan chain elongation from lipid-linked precursors. This chain is Biosynthetic peptidoglycan transglycosylase, found in Thiobacillus denitrificans (strain ATCC 25259 / T1).